The primary structure comprises 370 residues: Anhydro-N-acetylmuramic acid kinase (370 aa).

Residue 12–19 (GTSLDGVD) participates in ATP binding.

Belongs to the anhydro-N-acetylmuramic acid kinase family.

It catalyses the reaction 1,6-anhydro-N-acetyl-beta-muramate + ATP + H2O = N-acetyl-D-muramate 6-phosphate + ADP + H(+). The protein operates within amino-sugar metabolism; 1,6-anhydro-N-acetylmuramate degradation. It participates in cell wall biogenesis; peptidoglycan recycling. In terms of biological role, catalyzes the specific phosphorylation of 1,6-anhydro-N-acetylmuramic acid (anhMurNAc) with the simultaneous cleavage of the 1,6-anhydro ring, generating MurNAc-6-P. Is required for the utilization of anhMurNAc either imported from the medium or derived from its own cell wall murein, and thus plays a role in cell wall recycling. In Yersinia pseudotuberculosis serotype O:1b (strain IP 31758), this protein is Anhydro-N-acetylmuramic acid kinase.